The chain runs to 376 residues: D-alanine--D-alanine ligase B (376 aa).

The 207-residue stretch at 155–361 folds into the ATP-grasp domain; that stretch reads KRLMRDAGLP…QTDLMDKLIA (207 aa). ATP is bound at residue 184–239; that stretch reads AALGTPDLFVKPANLGSSVGVSRARSEEEFAASCALAFRYDRKILVEQALNGAREI. 3 residues coordinate Mg(2+): D316, E328, and N330.

Belongs to the D-alanine--D-alanine ligase family. It depends on Mg(2+) as a cofactor. Requires Mn(2+) as cofactor.

Its subcellular location is the cytoplasm. The enzyme catalyses 2 D-alanine + ATP = D-alanyl-D-alanine + ADP + phosphate + H(+). It functions in the pathway cell wall biogenesis; peptidoglycan biosynthesis. Cell wall formation. The chain is D-alanine--D-alanine ligase B from Bradyrhizobium diazoefficiens (strain JCM 10833 / BCRC 13528 / IAM 13628 / NBRC 14792 / USDA 110).